Reading from the N-terminus, the 387-residue chain is Phosphoglycerate kinase (387 aa).

Residues 21–23 (DLN), Arg-36, 59–62 (HLGR), Arg-113, and Arg-146 each bind substrate. ATP-binding positions include Lys-197, Glu-314, and 340–343 (GGDT).

Belongs to the phosphoglycerate kinase family. Monomer.

The protein resides in the cytoplasm. The enzyme catalyses (2R)-3-phosphoglycerate + ATP = (2R)-3-phospho-glyceroyl phosphate + ADP. It participates in carbohydrate degradation; glycolysis; pyruvate from D-glyceraldehyde 3-phosphate: step 2/5. This Aliivibrio fischeri (strain ATCC 700601 / ES114) (Vibrio fischeri) protein is Phosphoglycerate kinase.